The following is a 415-amino-acid chain: Queuine tRNA-ribosyltransferase accessory subunit 2 (415 aa).

C351, C353, C356, and H382 together coordinate Zn(2+).

The protein belongs to the queuine tRNA-ribosyltransferase family. QTRT2 subfamily. As to quaternary structure, heterodimer of a catalytic subunit QTRT1 and an accessory subunit QTRT2. The cofactor is Zn(2+).

Its subcellular location is the cytoplasm. The protein resides in the mitochondrion outer membrane. In terms of biological role, non-catalytic subunit of the queuine tRNA-ribosyltransferase (TGT) that catalyzes the base-exchange of a guanine (G) residue with queuine (Q) at position 34 (anticodon wobble position) in tRNAs with GU(N) anticodons (tRNA-Asp, -Asn, -His and -Tyr), resulting in the hypermodified nucleoside queuosine (7-(((4,5-cis-dihydroxy-2-cyclopenten-1-yl)amino)methyl)-7-deazaguanosine). The protein is Queuine tRNA-ribosyltransferase accessory subunit 2 of Pongo abelii (Sumatran orangutan).